A 566-amino-acid polypeptide reads, in one-letter code: Tetratricopeptide repeat protein 34 (566 aa).

Positions 1–29 are disordered; it reads MLQRSPRAGPSRAQGRREAAETGGPTTQE. TPR repeat units lie at residues 50 to 83, 178 to 211, 212 to 245, 306 to 339, 341 to 373, 424 to 457, 464 to 497, and 512 to 545; these read EASR…RPQA, SESL…EPGN, VQAL…GPGT, PHWH…APTS, AARA…DAPD, ACHL…ALGD, AEDF…APSL, and ARMF…DPDH.

The protein is Tetratricopeptide repeat protein 34 (TTC34) of Homo sapiens (Human).